The chain runs to 509 residues: Heat shock 70 kDa protein 14 (509 aa).

Belongs to the heat shock protein 70 family. In terms of assembly, component of ribosome-associated complex (RAC), a heterodimer composed of Hsp70/DnaK-type chaperone HSPA14 and Hsp40/DnaJ-type chaperone DNAJC2.

It is found in the cytoplasm. It localises to the cytosol. Functionally, component of the ribosome-associated complex (RAC), a complex involved in folding or maintaining nascent polypeptides in a folding-competent state. In the RAC complex, binds to the nascent polypeptide chain, while DNAJC2 stimulates its ATPase activity. This Bos taurus (Bovine) protein is Heat shock 70 kDa protein 14 (HSPA14).